A 464-amino-acid chain; its full sequence is Glutamate decarboxylase (464 aa).

The residue at position 274 (K274) is an N6-(pyridoxal phosphate)lysine.

This sequence belongs to the group II decarboxylase family. It depends on pyridoxal 5'-phosphate as a cofactor.

The enzyme catalyses L-glutamate + H(+) = 4-aminobutanoate + CO2. Catalyzes the pyridoxal-dependent decarboxylation of glutamate to produce 4-aminobutanoate. Has weak activity with aspartate, but cannot complement an E.coli panD deletion mutant. This Aliivibrio fischeri (strain ATCC 700601 / ES114) (Vibrio fischeri) protein is Glutamate decarboxylase.